A 401-amino-acid polypeptide reads, in one-letter code: 4-hydroxy-3-methylbut-2-enyl diphosphate reductase (401 aa).

Cysteine 66 provides a ligand contact to [4Fe-4S] cluster. Histidine 96 lines the (2E)-4-hydroxy-3-methylbut-2-enyl diphosphate pocket. Histidine 96 serves as a coordination point for dimethylallyl diphosphate. An isopentenyl diphosphate-binding site is contributed by histidine 96. [4Fe-4S] cluster is bound at residue cysteine 157. Histidine 185 is a binding site for (2E)-4-hydroxy-3-methylbut-2-enyl diphosphate. Histidine 185 is a dimethylallyl diphosphate binding site. Histidine 185 lines the isopentenyl diphosphate pocket. Glutamate 187 functions as the Proton donor in the catalytic mechanism. (2E)-4-hydroxy-3-methylbut-2-enyl diphosphate is bound at residue threonine 250. [4Fe-4S] cluster is bound at residue cysteine 288. The (2E)-4-hydroxy-3-methylbut-2-enyl diphosphate site is built by serine 317, serine 318, asparagine 319, and serine 379. 4 residues coordinate dimethylallyl diphosphate: serine 317, serine 318, asparagine 319, and serine 379. Residues serine 317, serine 318, asparagine 319, and serine 379 each contribute to the isopentenyl diphosphate site.

It belongs to the IspH family. [4Fe-4S] cluster serves as cofactor.

It catalyses the reaction isopentenyl diphosphate + 2 oxidized [2Fe-2S]-[ferredoxin] + H2O = (2E)-4-hydroxy-3-methylbut-2-enyl diphosphate + 2 reduced [2Fe-2S]-[ferredoxin] + 2 H(+). It carries out the reaction dimethylallyl diphosphate + 2 oxidized [2Fe-2S]-[ferredoxin] + H2O = (2E)-4-hydroxy-3-methylbut-2-enyl diphosphate + 2 reduced [2Fe-2S]-[ferredoxin] + 2 H(+). It functions in the pathway isoprenoid biosynthesis; dimethylallyl diphosphate biosynthesis; dimethylallyl diphosphate from (2E)-4-hydroxy-3-methylbutenyl diphosphate: step 1/1. It participates in isoprenoid biosynthesis; isopentenyl diphosphate biosynthesis via DXP pathway; isopentenyl diphosphate from 1-deoxy-D-xylulose 5-phosphate: step 6/6. Its function is as follows. Catalyzes the conversion of 1-hydroxy-2-methyl-2-(E)-butenyl 4-diphosphate (HMBPP) into a mixture of isopentenyl diphosphate (IPP) and dimethylallyl diphosphate (DMAPP). Acts in the terminal step of the DOXP/MEP pathway for isoprenoid precursor biosynthesis. This chain is 4-hydroxy-3-methylbut-2-enyl diphosphate reductase, found in Trichodesmium erythraeum (strain IMS101).